A 394-amino-acid polypeptide reads, in one-letter code: Probable aspartate/prephenate aminotransferase (394 aa).

Glycine 40, tryptophan 126, and asparagine 176 together coordinate L-aspartate. N6-(pyridoxal phosphate)lysine is present on lysine 239. Arginine 370 serves as a coordination point for L-aspartate.

Belongs to the class-I pyridoxal-phosphate-dependent aminotransferase family. As to quaternary structure, homodimer. Pyridoxal 5'-phosphate serves as cofactor.

It is found in the cytoplasm. The catalysed reaction is L-aspartate + 2-oxoglutarate = oxaloacetate + L-glutamate. It catalyses the reaction L-arogenate + oxaloacetate = prephenate + L-aspartate. Functionally, catalyzes the reversible conversion of aspartate and 2-oxoglutarate to glutamate and oxaloacetate. Can also transaminate prephenate in the presence of aspartate. In Aquifex aeolicus (strain VF5), this protein is Probable aspartate/prephenate aminotransferase (aspC).